The following is a 258-amino-acid chain: Flagellar L-ring protein (258 aa).

An N-terminal signal peptide occupies residues 1 to 15 (MKRIVCLALFLSMTG). Cysteine 16 carries N-palmitoyl cysteine lipidation. The S-diacylglycerol cysteine moiety is linked to residue cysteine 16.

The protein belongs to the FlgH family. As to quaternary structure, the basal body constitutes a major portion of the flagellar organelle and consists of four rings (L,P,S, and M) mounted on a central rod.

It localises to the cell outer membrane. The protein resides in the bacterial flagellum basal body. Its function is as follows. Assembles around the rod to form the L-ring and probably protects the motor/basal body from shearing forces during rotation. The polypeptide is Flagellar L-ring protein (Vibrio atlanticus (strain LGP32) (Vibrio splendidus (strain Mel32))).